The sequence spans 296 residues: Protoheme IX farnesyltransferase (296 aa).

9 helical membrane-spanning segments follow: residues 9 to 29 (VTKP…FLLA), 36 to 56 (YPLF…GCVF), 75 to 95 (VLVK…VLGI), 99 to 119 (LLLY…GFVI), 133 to 153 (VYGT…GYCA), 163 to 183 (LILL…IAIF), 209 to 229 (ITLY…SGYA), 234 to 254 (LVVA…GYKA), and 265 to 285 (FVFS…DFNV).

It belongs to the UbiA prenyltransferase family. Protoheme IX farnesyltransferase subfamily.

It localises to the cell inner membrane. The catalysed reaction is heme b + (2E,6E)-farnesyl diphosphate + H2O = Fe(II)-heme o + diphosphate. It participates in porphyrin-containing compound metabolism; heme O biosynthesis; heme O from protoheme: step 1/1. In terms of biological role, converts heme B (protoheme IX) to heme O by substitution of the vinyl group on carbon 2 of heme B porphyrin ring with a hydroxyethyl farnesyl side group. This chain is Protoheme IX farnesyltransferase, found in Yersinia pestis bv. Antiqua (strain Antiqua).